The chain runs to 547 residues: MRASVMLCAALGGFLFGYDTGVINAALFQMKDHFGFSEHSWQYALIVAIAIAGAFVGAFISGFISAAFGRRPCIAVADALFVIGSVLMGAAPNVEVVLVSRVIVGLAIGISSATIPVYLAEVTSPKHRGATIVLNNLFLTGGQFVAAGFTAIMVVFTSKNIGWRVAIGIGALPAVVQAFCLLFFLPESPRWLLSKGHADRAKAVADKFEVDLCEFQEGDELPSVRIDYRPLMARDMRFRVVLSSGLQIIQQFSGINTIMYYSSVILYDAGFRDAIMPVVLSIPLAFMNALFTAVAIFTVDRFGRRRMLLISVFGCLVLLVVIAIIGFFIGTRISYSVGGGLFLALLAVFLALYAPGIGCIPWVIMGEIFPTHLRTSAASVATMANWGANVLVSQVFPILMGAIGVGGTFTIISGLMALGCIFVYFFAVETKGLTLEQIDNMFRKRAGLPPRFHEEGESGESGAGYREDGDLGRLATEDVCDLSSLGNRVVSFAKAEDAFTEVAMPDRHAVSNKFEERATSSSSDPQSLENQDEVRQAAIKAAPHEPK.

Over 1-2 the chain is Cytoplasmic; that stretch reads MR. Residues 3-25 form a helical membrane-spanning segment; the sequence is ASVMLCAALGGFLFGYDTGVINA. The Extracellular portion of the chain corresponds to 26–43; sequence ALFQMKDHFGFSEHSWQY. Residues 44-64 traverse the membrane as a helical segment; sequence ALIVAIAIAGAFVGAFISGFI. The Cytoplasmic segment spans residues 65 to 78; sequence SAAFGRRPCIAVAD. The chain crosses the membrane as a helical span at residues 79-99; that stretch reads ALFVIGSVLMGAAPNVEVVLV. The Extracellular portion of the chain corresponds to 100 to 101; the sequence is SR. Residues 102-122 traverse the membrane as a helical segment; it reads VIVGLAIGISSATIPVYLAEV. Residues 123-136 are Cytoplasmic-facing; it reads TSPKHRGATIVLNN. The chain crosses the membrane as a helical span at residues 137-157; that stretch reads LFLTGGQFVAAGFTAIMVVFT. The Extracellular segment spans residues 158-164; the sequence is SKNIGWR. Residues 165 to 185 traverse the membrane as a helical segment; that stretch reads VAIGIGALPAVVQAFCLLFFL. Residues 186 to 245 lie on the Cytoplasmic side of the membrane; that stretch reads PESPRWLLSKGHADRAKAVADKFEVDLCEFQEGDELPSVRIDYRPLMARDMRFRVVLSSG. Residues 246 to 266 form a helical membrane-spanning segment; the sequence is LQIIQQFSGINTIMYYSSVIL. Residues 267 to 276 are Extracellular-facing; sequence YDAGFRDAIM. The chain crosses the membrane as a helical span at residues 277–297; the sequence is PVVLSIPLAFMNALFTAVAIF. The Cytoplasmic portion of the chain corresponds to 298–308; the sequence is TVDRFGRRRML. Residues 309-329 form a helical membrane-spanning segment; sequence LISVFGCLVLLVVIAIIGFFI. At 330–339 the chain is on the extracellular side; sequence GTRISYSVGG. A helical transmembrane segment spans residues 340 to 360; that stretch reads GLFLALLAVFLALYAPGIGCI. Topologically, residues 361-385 are cytoplasmic; it reads PWVIMGEIFPTHLRTSAASVATMAN. The chain crosses the membrane as a helical span at residues 386–406; it reads WGANVLVSQVFPILMGAIGVG. Gly407 is a topological domain (extracellular). The chain crosses the membrane as a helical span at residues 408 to 428; that stretch reads TFTIISGLMALGCIFVYFFAV. Topologically, residues 429-547 are cytoplasmic; the sequence is ETKGLTLEQI…AIKAAPHEPK (119 aa). Disordered regions lie at residues 449–468 and 510–547; these read PPRFHEEGESGESGAGYRED and VSNKFEERATSSSSDPQSLENQDEVRQAAIKAAPHEPK. The span at 519 to 529 shows a compositional bias: polar residues; the sequence is TSSSSDPQSLE.

The protein belongs to the major facilitator superfamily. Sugar transporter (TC 2.A.1.1) family.

The protein resides in the membrane. The sequence is that of Membrane transporter D1 from Leishmania donovani.